Consider the following 405-residue polypeptide: Replication factor C large subunit (405 aa).

47 to 54 (GPPGVGKT) lines the ATP pocket.

Belongs to the activator 1 small subunits family. RfcL subfamily. As to quaternary structure, heteropentamer composed of four small subunits (RfcS) and one large subunit (RfcL). Probably interacts with PCNA subunit PCNA3.

In terms of biological role, part of the RFC clamp loader complex which loads the PCNA sliding clamp onto DNA. The complex possesses DNA-dependent ATPase activity. The chain is Replication factor C large subunit (rfcL) from Saccharolobus solfataricus (strain ATCC 35092 / DSM 1617 / JCM 11322 / P2) (Sulfolobus solfataricus).